The primary structure comprises 94 residues: Co-chaperonin GroES (94 aa).

It belongs to the GroES chaperonin family. In terms of assembly, heptamer of 7 subunits arranged in a ring. Interacts with the chaperonin GroEL.

It localises to the cytoplasm. Functionally, together with the chaperonin GroEL, plays an essential role in assisting protein folding. The GroEL-GroES system forms a nano-cage that allows encapsulation of the non-native substrate proteins and provides a physical environment optimized to promote and accelerate protein folding. GroES binds to the apical surface of the GroEL ring, thereby capping the opening of the GroEL channel. This is Co-chaperonin GroES from Brevibacillus choshinensis.